The following is a 181-amino-acid chain: Insulin-like growth factor 2 (181 aa).

Residues 1–24 (MGIPMRKPLLVLLVFLALASCCYA) form the signal peptide. The segment at 25–52 (AYRPSETLCGGELVDTLQFVCGDRGFYF) is b. Intrachain disulfides connect Cys-33–Cys-71, Cys-45–Cys-84, and Cys-70–Cys-75. The tract at residues 53 to 64 (SRPASRVNRRSR) is c. Residues 65 to 85 (GIVEECCFRSCDLALLETYCA) form an a region. The segment at 86–91 (TPAKSE) is d. Residues 92 to 181 (RDVSTPPTVL…ASPEASGHRK (90 aa)) constitute a propeptide, e peptide. The interval 151–181 (EAKRHRPLTARPTRDPAAHGGASPEASGHRK) is disordered. An O-linked (GalNAc...) threonine glycan is attached at Thr-163.

It belongs to the insulin family. In terms of assembly, interacts with MYORG; this interaction is required for IGF2 secretion. Interacts with integrins ITGAV:ITGB3 and ITGA6:ITGB4; integrin-binding is required for IGF2 signaling. Interacts with IGFBP2. Proteolytically processed by PCSK4, proIGF2 is cleaved at Arg-128 and Arg-92 to generate big-IGF2 and mature IGF2.

The protein localises to the secreted. Its function is as follows. The insulin-like growth factors possess growth-promoting activity. Major fetal growth hormone in mammals. Plays a key role in regulating fetoplacental development. IGF2 is influenced by placental lactogen. Also involved in tissue differentiation. In adults, involved in glucose metabolism in adipose tissue, skeletal muscle and liver. Acts as a ligand for integrin which is required for IGF2 signaling. Positively regulates myogenic transcription factor MYOD1 function by facilitating the recruitment of transcriptional coactivators, thereby controlling muscle terminal differentiation. Inhibits myoblast differentiation and modulates metabolism via increasing the mitochondrial respiration rate. Preptin undergoes glucose-mediated co-secretion with insulin, and acts as a physiological amplifier of glucose-mediated insulin secretion. Exhibits osteogenic properties by increasing osteoblast mitogenic activity through phosphoactivation of MAPK1 and MAPK3. The polypeptide is Insulin-like growth factor 2 (Sus scrofa (Pig)).